A 621-amino-acid polypeptide reads, in one-letter code: Putative DNA 3'-5' helicase Rad25 (621 aa).

One can recognise a Helicase ATP-binding domain in the interval 268-417 (VERFTEQGSG…EIFTLIGPPI (150 aa)). Position 281–288 (281–288 (GPPGSGKT)) interacts with ATP. The DEAH box signature appears at 371 to 374 (DEVH). The disordered stretch occupies residues 441–465 (PWGDETEQSEYSSTSGHDRRQAAAS). One can recognise a Helicase C-terminal domain in the interval 469–621 (KIDEIRYALA…EAVEPPAKTE (153 aa)).

The protein belongs to the helicase family. RAD25/XPB subfamily.

It catalyses the reaction Couples ATP hydrolysis with the unwinding of duplex DNA by translocating in the 3'-5' direction.. It carries out the reaction ATP + H2O = ADP + phosphate + H(+). This is Putative DNA 3'-5' helicase Rad25 from Haloarcula marismortui (strain ATCC 43049 / DSM 3752 / JCM 8966 / VKM B-1809) (Halobacterium marismortui).